The following is a 409-amino-acid chain: NADH-ubiquinone oxidoreductase chain 4 (409 aa).

13 helical membrane-spanning segments follow: residues 9–29 (LYFFFEPVLFFFFMVVFGFVA), 44–64 (SFSFILLIVMSLFILGVVLLS), 68–88 (FMLLLLSEVLVVVCVFFFVPS), 90–110 (VILMYMYFELSMFPILVMILG), 125–145 (IFYAALCSFPFLFVYFKSFFF), 160–180 (VFVLSLSFMMKFPVYFLHLWL), 194–214 (LLAGLLLKLGTAGFLRILGCL), 221–241 (VWIVLAFLGMILASFCCMFQS), 246–268 (LAAYSSITHMSFVLMALVFIIMS), 273–295 (GVILMLAHGYTSTLMFYLVGEFY), 305–325 (YMSSFFGSGMIMALLFAVVFL), 352–372 (FSFWVLFVYFFSAFYYSIYLL), and 389–409 (VGFSVPLVFMMYNIFWMSVFF).

It belongs to the complex I subunit 4 family.

It localises to the mitochondrion membrane. It carries out the reaction a ubiquinone + NADH + 5 H(+)(in) = a ubiquinol + NAD(+) + 4 H(+)(out). Functionally, core subunit of the mitochondrial membrane respiratory chain NADH dehydrogenase (Complex I) that is believed to belong to the minimal assembly required for catalysis. Complex I functions in the transfer of electrons from NADH to the respiratory chain. The immediate electron acceptor for the enzyme is believed to be ubiquinone. The protein is NADH-ubiquinone oxidoreductase chain 4 (ND4) of Ascaris suum (Pig roundworm).